We begin with the raw amino-acid sequence, 906 residues long: Alanine--tRNA ligase (906 aa).

His-600, His-604, Cys-703, and His-707 together coordinate Zn(2+).

The protein belongs to the class-II aminoacyl-tRNA synthetase family. In terms of assembly, homodimer. Zn(2+) serves as cofactor.

Its subcellular location is the cytoplasm. It catalyses the reaction tRNA(Ala) + L-alanine + ATP = L-alanyl-tRNA(Ala) + AMP + diphosphate. Functionally, catalyzes the attachment of alanine to tRNA(Ala) in a two-step reaction: alanine is first activated by ATP to form Ala-AMP and then transferred to the acceptor end of tRNA(Ala). Incorrectly charged aminoacyl-tRNA(Ala) is also edited in situ by the editing domain. In Archaeoglobus fulgidus (strain ATCC 49558 / DSM 4304 / JCM 9628 / NBRC 100126 / VC-16), this protein is Alanine--tRNA ligase (alaS).